Reading from the N-terminus, the 426-residue chain is Dihydroorotase (426 aa).

Residues His55 and His57 each contribute to the Zn(2+) site. Residues 57–59 (HLR) and Asn89 each bind substrate. Zn(2+) contacts are provided by Asp147, His174, His233, and Asp306. Asp306 is an active-site residue. Substrate contacts are provided by residues His310 and 324 to 325 (FG).

It belongs to the metallo-dependent hydrolases superfamily. DHOase family. Class I DHOase subfamily. It depends on Zn(2+) as a cofactor.

It carries out the reaction (S)-dihydroorotate + H2O = N-carbamoyl-L-aspartate + H(+). It functions in the pathway pyrimidine metabolism; UMP biosynthesis via de novo pathway; (S)-dihydroorotate from bicarbonate: step 3/3. Catalyzes the reversible cyclization of carbamoyl aspartate to dihydroorotate. This Thermus aquaticus protein is Dihydroorotase.